Consider the following 1113-residue polypeptide: Cytospin-A (1113 aa).

The interval 1 to 160 (MKKSVRPAAS…KSKSDGQISD (160 aa)) is disordered. Residues 59–103 (ASCNAVSKSKRTTSVGTTASTLDSKPKTASGTTSKRLASSLSKET) show a composition bias toward polar residues. A compositionally biased stretch (basic and acidic residues) spans 145–154 (SEGRMSKSKS). Residues 220–259 (AADVESTLILLQEQNQAIREELNLLKSENRMLKDRLNALG) adopt a coiled-coil conformation. Residues 284–374 (AGSGQSDGGG…RRGSSGNASE (91 aa)) are disordered. A compositionally biased stretch (low complexity) spans 338–358 (SSDDALDAPSGASSSSESECA). Coiled coils occupy residues 379–433 (CLTE…MDSL) and 473–791 (MELE…RGRV). Disordered regions lie at residues 766–785 (QEKN…RKQD), 832–902 (FDSA…PTYP), 914–957 (GSAA…DGAS), and 972–997 (ALAS…RKDP). Over residues 834 to 845 (SASQGPPSSGAS) the composition is skewed to low complexity. Positions 856-867 (PRTPLSPSPMKT) are enriched in pro residues. Over residues 925–940 (QRVSNMDSTKAISVSR) the composition is skewed to polar residues. The span at 941–951 (RSSEEMKRDMA) shows a compositional bias: basic and acidic residues. Low complexity predominate over residues 972-981 (ALASSSPTAS). The Calponin-homology (CH) domain maps to 1007–1112 (GSKRNALLKW…YVTAIYKYFE (106 aa)).

This sequence belongs to the cytospin-A family. In terms of assembly, may interact with both microtubules and actin cytoskeleton.

Its subcellular location is the cytoplasm. It localises to the cytoskeleton. It is found in the spindle. The protein resides in the cell junction. The protein localises to the gap junction. Its function is as follows. Involved in cytokinesis and spindle organization. May play a role in actin cytoskeleton organization and microtubule stabilization and hence required for proper cell adhesion and migration. This is Cytospin-A (specc1l) from Tetraodon nigroviridis (Spotted green pufferfish).